The chain runs to 159 residues: Protein SPA, chloroplastic (159 aa).

The transit peptide at 1–47 directs the protein to the chloroplast; sequence MLTAPSLSRFKSPFISSPLKLPTLSSSFFTQKFHQTCRRRNSYPCIK. Residues 56-76 form a helical membrane-spanning segment; it reads VIAITVGVLSVAIGVGIPVFY. The CR-type-like stretch occupies residues 85 to 145; the sequence is KRENTQPCFP…TCTTCQGSGI (61 aa). 4 CXXCXGXG motif repeats span residues 92–99, 103–110, 126–133, and 137–144; these read CFPCTGTG, CRFCMGTG, CINCDGAG, and CTTCQGSG.

Expressed in source leaves. Lower levels of expression in fruits and stems.

The protein resides in the plastid. It is found in the chloroplast thylakoid membrane. In terms of biological role, participates in determining harvest index (HI) by affecting source-sink carbon distribution. Up-regulates the conversion of fixed carbon to exportable sugars. The chain is Protein SPA, chloroplastic from Solanum lycopersicum (Tomato).